We begin with the raw amino-acid sequence, 219 residues long: Small ribosomal subunit protein uS3 (219 aa).

One can recognise a KH type-2 domain in the interval 38–106 (IREYINVRLK…RVHINILEVK (69 aa)).

It belongs to the universal ribosomal protein uS3 family. In terms of assembly, part of the 30S ribosomal subunit. Forms a tight complex with proteins S10 and S14.

In terms of biological role, binds the lower part of the 30S subunit head. Binds mRNA in the 70S ribosome, positioning it for translation. The chain is Small ribosomal subunit protein uS3 from Bacillus thuringiensis (strain Al Hakam).